Consider the following 469-residue polypeptide: uncharacterized protein (469 aa).

The first 19 residues, 1-19 (MRINFVLLITLILPWFVSG), serve as a signal peptide directing secretion. A run of 7 helical transmembrane segments spans residues 199-219 (IKST…TWLL), 236-256 (AFWV…MVAI), 283-303 (AYTS…PALV), 305-325 (YYVY…FAPL), 338-358 (ILLK…PFFA), 386-406 (IALA…RPLL), and 413-433 (GFQL…AFLF).

It localises to the membrane. This is an uncharacterized protein from Schizosaccharomyces pombe (strain 972 / ATCC 24843) (Fission yeast).